We begin with the raw amino-acid sequence, 550 residues long: Glucose-6-phosphate isomerase (550 aa).

Catalysis depends on Glu355, which acts as the Proton donor. Residues His386 and Lys512 contribute to the active site.

The protein belongs to the GPI family.

The protein resides in the cytoplasm. The catalysed reaction is alpha-D-glucose 6-phosphate = beta-D-fructose 6-phosphate. The protein operates within carbohydrate biosynthesis; gluconeogenesis. It functions in the pathway carbohydrate degradation; glycolysis; D-glyceraldehyde 3-phosphate and glycerone phosphate from D-glucose: step 2/4. Its function is as follows. Catalyzes the reversible isomerization of glucose-6-phosphate to fructose-6-phosphate. This is Glucose-6-phosphate isomerase from Rhodococcus opacus (strain B4).